A 159-amino-acid polypeptide reads, in one-letter code: MKITILAVGKLKEKYWKQAIAEYQKRLGAYTKIEIIEVPDEKAPENMSDKEVEQVKEKEGQRLLAKIKPQSTVITLEIQGNMLTSEGLAKNLQQRMVQGQSDFTFVIGGSNGLHQDVLDRSNYALSFSKMTFPHQMMRVILLEQVYRAFKIMRGEAYHK.

Residues leucine 76, glycine 108, and 127-132 (FSKMTF) each bind S-adenosyl-L-methionine.

Belongs to the RNA methyltransferase RlmH family. In terms of assembly, homodimer.

The protein resides in the cytoplasm. The catalysed reaction is pseudouridine(1915) in 23S rRNA + S-adenosyl-L-methionine = N(3)-methylpseudouridine(1915) in 23S rRNA + S-adenosyl-L-homocysteine + H(+). Its function is as follows. Specifically methylates the pseudouridine at position 1915 (m3Psi1915) in 23S rRNA. The chain is Ribosomal RNA large subunit methyltransferase H from Staphylococcus carnosus (strain TM300).